Reading from the N-terminus, the 552-residue chain is Dihydroxy-acid dehydratase (552 aa).

Asp-78 contributes to the Mg(2+) binding site. Cys-119 serves as a coordination point for [2Fe-2S] cluster. Mg(2+)-binding residues include Asp-120 and Lys-121. Lys-121 is modified (N6-carboxylysine). Residue Cys-190 coordinates [2Fe-2S] cluster. Glu-441 lines the Mg(2+) pocket. Catalysis depends on Ser-467, which acts as the Proton acceptor.

This sequence belongs to the IlvD/Edd family. As to quaternary structure, homodimer. Requires [2Fe-2S] cluster as cofactor. It depends on Mg(2+) as a cofactor.

The catalysed reaction is (2R)-2,3-dihydroxy-3-methylbutanoate = 3-methyl-2-oxobutanoate + H2O. It catalyses the reaction (2R,3R)-2,3-dihydroxy-3-methylpentanoate = (S)-3-methyl-2-oxopentanoate + H2O. It participates in amino-acid biosynthesis; L-isoleucine biosynthesis; L-isoleucine from 2-oxobutanoate: step 3/4. Its pathway is amino-acid biosynthesis; L-valine biosynthesis; L-valine from pyruvate: step 3/4. Its function is as follows. Functions in the biosynthesis of branched-chain amino acids. Catalyzes the dehydration of (2R,3R)-2,3-dihydroxy-3-methylpentanoate (2,3-dihydroxy-3-methylvalerate) into 2-oxo-3-methylpentanoate (2-oxo-3-methylvalerate) and of (2R)-2,3-dihydroxy-3-methylbutanoate (2,3-dihydroxyisovalerate) into 2-oxo-3-methylbutanoate (2-oxoisovalerate), the penultimate precursor to L-isoleucine and L-valine, respectively. The sequence is that of Dihydroxy-acid dehydratase from Ignicoccus hospitalis (strain KIN4/I / DSM 18386 / JCM 14125).